We begin with the raw amino-acid sequence, 521 residues long: Probable methylmalonate-semialdehyde/malonate-semialdehyde dehydrogenase [acylating], mitochondrial (521 aa).

Positions 170, 172, 196, 199, 200, and 249 each coordinate NAD(+). Cys-304 (nucleophile) is an active-site residue. Glu-404 contributes to the NAD(+) binding site.

It belongs to the aldehyde dehydrogenase family. Homotetramer.

The protein localises to the mitochondrion. The enzyme catalyses 2-methyl-3-oxopropanoate + NAD(+) + CoA + H2O = propanoyl-CoA + hydrogencarbonate + NADH + H(+). It carries out the reaction 3-oxopropanoate + NAD(+) + CoA + H2O = hydrogencarbonate + acetyl-CoA + NADH + H(+). Probable malonate and methylmalonate semialdehyde dehydrogenase involved in the catabolism of valine, thymine, and compounds catabolized by way of beta-alanine, including uracil and cytidine. The protein is Probable methylmalonate-semialdehyde/malonate-semialdehyde dehydrogenase [acylating], mitochondrial of Anopheles gambiae (African malaria mosquito).